The primary structure comprises 186 residues: Ribosome-recycling factor (186 aa).

It belongs to the RRF family.

It localises to the cytoplasm. Functionally, responsible for the release of ribosomes from messenger RNA at the termination of protein biosynthesis. May increase the efficiency of translation by recycling ribosomes from one round of translation to another. This is Ribosome-recycling factor from Bordetella parapertussis (strain 12822 / ATCC BAA-587 / NCTC 13253).